The chain runs to 341 residues: Methionine import ATP-binding protein MetN 1 (341 aa).

In terms of domain architecture, ABC transporter spans 2–241 (IEFRQVSKSF…PKTTIAQNFV (240 aa)). 38–45 (GYSGAGKS) contacts ATP.

This sequence belongs to the ABC transporter superfamily. Methionine importer (TC 3.A.1.24) family. As to quaternary structure, the complex is composed of two ATP-binding proteins (MetN), two transmembrane proteins (MetI) and a solute-binding protein (MetQ).

The protein resides in the cell membrane. It carries out the reaction L-methionine(out) + ATP + H2O = L-methionine(in) + ADP + phosphate + H(+). The catalysed reaction is D-methionine(out) + ATP + H2O = D-methionine(in) + ADP + phosphate + H(+). Part of the ABC transporter complex MetNIQ involved in methionine import. Responsible for energy coupling to the transport system. This chain is Methionine import ATP-binding protein MetN 1, found in Staphylococcus aureus (strain bovine RF122 / ET3-1).